A 287-amino-acid chain; its full sequence is uncharacterized protein (287 aa).

2 helical membrane-spanning segments follow: residues 12–32 (IILL…GAAL) and 217–237 (YTIG…VLIV).

The protein resides in the cell membrane. This is an uncharacterized protein from Mycoplasma pneumoniae (strain ATCC 29342 / M129 / Subtype 1) (Mycoplasmoides pneumoniae).